The primary structure comprises 655 residues: WD repeat-containing protein 70 (655 aa).

2 disordered regions span residues 1-24 (MEHS…LAVT) and 43-170 (FEQT…PIHR). Over residues 45 to 78 (QTRRTAVERSRKTLEAREKEEEMNREKELRKQLE) the composition is skewed to basic and acidic residues. Over residues 99-112 (RDTSSSDSDHSSGS) the composition is skewed to low complexity. A compositionally biased stretch (acidic residues) spans 148–165 (EEGEDDDDDDLEDEGEED). 7 WD repeats span residues 181 to 220 (HGTK…ASFK), 228 to 269 (CECH…ECIK), 282 to 322 (GHTA…KQKS), 331 to 370 (GKKV…HPKF), 377 to 416 (APGT…KPLF), 422 to 467 (PTLF…RVYE), and 470 to 509 (ITDA…QRGA). Lysine 297 is covalently cross-linked (Glycyl lysine isopeptide (Lys-Gly) (interchain with G-Cter in SUMO2)). N6-acetyllysine is present on lysine 453. Residues 541–566 (REPRQRSTRKQLEKDRLDPLKSHKPE) show a composition bias toward basic and acidic residues. The segment at 541 to 582 (REPRQRSTRKQLEKDRLDPLKSHKPEPPVAGPGRGGRVGTHG) is disordered. Gly residues predominate over residues 572–582 (PGRGGRVGTHG). At threonine 580 the chain carries Phosphothreonine. Glycyl lysine isopeptide (Lys-Gly) (interchain with G-Cter in SUMO2) cross-links involve residues lysine 591 and lysine 597. Phosphoserine is present on residues serine 622 and serine 639. Residues 632 to 655 (TMFAQVESDDEESKNEPEWKKRKI) are disordered. Basic and acidic residues predominate over residues 645–655 (KNEPEWKKRKI).

It belongs to the WD repeat GAD-1 family.

The chain is WD repeat-containing protein 70 (Wdr70) from Rattus norvegicus (Rat).